The sequence spans 401 residues: Deacetoxyvindoline 4-hydroxylase (401 aa).

Positions Cys-242–Thr-345 constitute a Fe2OG dioxygenase domain. Fe cation-binding residues include His-268, Asp-270, and His-324. Residue Arg-334 participates in 2-oxoglutarate binding.

Belongs to the iron/ascorbate-dependent oxidoreductase family. As to quaternary structure, monomer. Fe cation is required as a cofactor. It depends on L-ascorbate as a cofactor. Highest levels in leaves, lower levels in stems and fruits. Not expressed in flowers and roots.

It localises to the cytoplasm. The protein localises to the nucleus. The enzyme catalyses deacetoxyvindoline + 2-oxoglutarate + O2 = 4-O-deacetylvindoline + succinate + CO2. The protein operates within alkaloid biosynthesis; vindoline biosynthesis. Functionally, catalyzes the C4-hydroxylation of desacetoxyvindoline. This chain is Deacetoxyvindoline 4-hydroxylase, found in Catharanthus roseus (Madagascar periwinkle).